The sequence spans 234 residues: Ubiquinone biosynthesis O-methyltransferase (234 aa).

Arg-39, Gly-59, Asp-80, and Met-124 together coordinate S-adenosyl-L-methionine.

Belongs to the methyltransferase superfamily. UbiG/COQ3 family.

It carries out the reaction a 3-demethylubiquinol + S-adenosyl-L-methionine = a ubiquinol + S-adenosyl-L-homocysteine + H(+). It catalyses the reaction a 3-(all-trans-polyprenyl)benzene-1,2-diol + S-adenosyl-L-methionine = a 2-methoxy-6-(all-trans-polyprenyl)phenol + S-adenosyl-L-homocysteine + H(+). The protein operates within cofactor biosynthesis; ubiquinone biosynthesis. O-methyltransferase that catalyzes the 2 O-methylation steps in the ubiquinone biosynthetic pathway. The sequence is that of Ubiquinone biosynthesis O-methyltransferase from Aliivibrio fischeri (strain ATCC 700601 / ES114) (Vibrio fischeri).